A 247-amino-acid chain; its full sequence is Granzyme B(G,H) (247 aa).

The first 18 residues, 1–18 (MKILLLLLTLSLASRTKA), serve as a signal peptide directing secretion. Positions 19–20 (GE) are cleaved as a propeptide — activation peptide. In terms of domain architecture, Peptidase S1 spans 21–245 (IIGGHEVKPH…FLSWIKKTMK (225 aa)). The cysteines at positions 49 and 65 are disulfide-linked. His64 (charge relay system) is an active-site residue. The N-linked (GlcNAc...) asparagine glycan is linked to Asn71. Asp108 acts as the Charge relay system in catalysis. Disulfide bonds link Cys142–Cys209 and Cys173–Cys188. Residue Asn182 is glycosylated (N-linked (GlcNAc...) asparagine). The active-site Charge relay system is the Ser203.

It belongs to the peptidase S1 family. Granzyme subfamily.

It localises to the secreted. The protein localises to the cytolytic granule. The catalysed reaction is Preferential cleavage: -Asp-|-Xaa- &gt;&gt; -Asn-|-Xaa- &gt; -Met-|-Xaa-, -Ser-|-Xaa-.. Its activity is regulated as follows. Inactivated by the serine protease inhibitor diisopropylfluorophosphate. Its function is as follows. Abundant protease in the cytosolic granules of cytotoxic T-cells and NK-cells which activates caspase-independent pyroptosis when delivered into the target cell through the immunological synapse. It cleaves after Asp. Once delivered into the target cell, acts by catalyzing cleavage of gasdermin-E (GSDME), releasing the pore-forming moiety of GSDME, thereby triggering pyroptosis and target cell death. Seems to be linked to an activation cascade of caspases (aspartate-specific cysteine proteases) responsible for apoptosis execution. Cleaves caspase-3 and -9 (CASP3 and CASP9, respectively) to give rise to active enzymes mediating apoptosis. Cleaves and activates CASP7 in response to bacterial infection, promoting plasma membrane repair. In Mus musculus (Mouse), this protein is Granzyme B(G,H) (Gzmb).